Reading from the N-terminus, the 333-residue chain is MNLYRRYGWELTLAALLVLEILLFGLSNSRMLDINVLLFSTSDFICIGIVALPLTMVIVSGGIDISFGSTIGLCAIFLGIVFQAGVPMSVAIPLTVLIGALCGLINAGLILYTGVNPLVITLGTLYLFGGSALLLSGLSGATGYEGIGGFPAAFTDFANQTLFGLPIPLVIFMLCVLLFWLLMHRTHSGRHVFLIGQSSRVARYSALPIARTLCMLYAMTGVASAIAAILLVSYFGSARSDLGASFLMPAITAVVLGGANIYGGSGSILGTALAVLLVGYLQQGLQMIGTPNQISSALSGALLILVVVGRSISLHRHLIYEWLQRRRSRKASA.

10 helical membrane passes run 7 to 27 (YGWE…FGLS), 45 to 65 (ICIG…GIDI), 67 to 87 (FGST…AGVP), 90 to 110 (VAIP…AGLI), 118 to 138 (LVIT…LSGL), 162 to 182 (LFGL…FWLL), 212 to 232 (TLCM…ILLV), 240 to 260 (SDLG…GGAN), 261 to 281 (IYGG…VGYL), and 288 to 308 (IGTP…LVVV).

The protein belongs to the binding-protein-dependent transport system permease family. AraH/RbsC subfamily. As to quaternary structure, the complex is composed of two ATP-binding proteins (LsrA), two transmembrane proteins (LsrC and LsrD) and a solute-binding protein (LsrB).

The protein localises to the cell inner membrane. In terms of biological role, part of the ABC transporter complex LsrABCD involved in autoinducer 2 (AI-2) import. Probably responsible for the translocation of the substrate across the membrane. The sequence is that of Autoinducer 2 import system permease protein LsrD (lsrD) from Yersinia pseudotuberculosis serotype O:1b (strain IP 31758).